Consider the following 226-residue polypeptide: Protein-L-isoaspartate O-methyltransferase (226 aa).

Serine 75 is an active-site residue.

This sequence belongs to the methyltransferase superfamily. L-isoaspartyl/D-aspartyl protein methyltransferase family.

The protein resides in the cytoplasm. It carries out the reaction [protein]-L-isoaspartate + S-adenosyl-L-methionine = [protein]-L-isoaspartate alpha-methyl ester + S-adenosyl-L-homocysteine. Its function is as follows. Catalyzes the methyl esterification of L-isoaspartyl residues in peptides and proteins that result from spontaneous decomposition of normal L-aspartyl and L-asparaginyl residues. It plays a role in the repair and/or degradation of damaged proteins. This chain is Protein-L-isoaspartate O-methyltransferase, found in Lawsonia intracellularis (strain PHE/MN1-00).